The sequence spans 211 residues: Thiamine-phosphate synthase (211 aa).

4-amino-2-methyl-5-(diphosphooxymethyl)pyrimidine-binding positions include 37–41 (QLRIK) and N69. Residues D70 and D89 each coordinate Mg(2+). S108 provides a ligand contact to 4-amino-2-methyl-5-(diphosphooxymethyl)pyrimidine. 2-[(2R,5Z)-2-carboxy-4-methylthiazol-5(2H)-ylidene]ethyl phosphate is bound at residue 134-136 (TQT). K137 is a 4-amino-2-methyl-5-(diphosphooxymethyl)pyrimidine binding site. 2-[(2R,5Z)-2-carboxy-4-methylthiazol-5(2H)-ylidene]ethyl phosphate contacts are provided by residues G166 and 186 to 187 (VS).

It belongs to the thiamine-phosphate synthase family. It depends on Mg(2+) as a cofactor.

It catalyses the reaction 2-[(2R,5Z)-2-carboxy-4-methylthiazol-5(2H)-ylidene]ethyl phosphate + 4-amino-2-methyl-5-(diphosphooxymethyl)pyrimidine + 2 H(+) = thiamine phosphate + CO2 + diphosphate. It carries out the reaction 2-(2-carboxy-4-methylthiazol-5-yl)ethyl phosphate + 4-amino-2-methyl-5-(diphosphooxymethyl)pyrimidine + 2 H(+) = thiamine phosphate + CO2 + diphosphate. The catalysed reaction is 4-methyl-5-(2-phosphooxyethyl)-thiazole + 4-amino-2-methyl-5-(diphosphooxymethyl)pyrimidine + H(+) = thiamine phosphate + diphosphate. It participates in cofactor biosynthesis; thiamine diphosphate biosynthesis; thiamine phosphate from 4-amino-2-methyl-5-diphosphomethylpyrimidine and 4-methyl-5-(2-phosphoethyl)-thiazole: step 1/1. Its function is as follows. Condenses 4-methyl-5-(beta-hydroxyethyl)thiazole monophosphate (THZ-P) and 2-methyl-4-amino-5-hydroxymethyl pyrimidine pyrophosphate (HMP-PP) to form thiamine monophosphate (TMP). The polypeptide is Thiamine-phosphate synthase (Salmonella dublin (strain CT_02021853)).